The following is a 351-amino-acid chain: Phosphate acyltransferase (351 aa).

Belongs to the PlsX family. In terms of assembly, homodimer. Probably interacts with PlsY.

The protein resides in the cytoplasm. The enzyme catalyses a fatty acyl-[ACP] + phosphate = an acyl phosphate + holo-[ACP]. The protein operates within lipid metabolism; phospholipid metabolism. Functionally, catalyzes the reversible formation of acyl-phosphate (acyl-PO(4)) from acyl-[acyl-carrier-protein] (acyl-ACP). This enzyme utilizes acyl-ACP as fatty acyl donor, but not acyl-CoA. This chain is Phosphate acyltransferase, found in Neisseria meningitidis serogroup C / serotype 2a (strain ATCC 700532 / DSM 15464 / FAM18).